Here is a 347-residue protein sequence, read N- to C-terminus: tRNA pseudouridine synthase D (347 aa).

Aspartate 81 acts as the Nucleophile in catalysis. The TRUD domain maps to 158-304; it reads GVPNYFGNQR…MRHDRRAIAL (147 aa).

This sequence belongs to the pseudouridine synthase TruD family.

It catalyses the reaction uridine(13) in tRNA = pseudouridine(13) in tRNA. Its function is as follows. Responsible for synthesis of pseudouridine from uracil-13 in transfer RNAs. This Vibrio vulnificus (strain CMCP6) protein is tRNA pseudouridine synthase D.